The following is a 610-amino-acid chain: Zinc metalloproteinase-disintegrin-like bothropasin (610 aa).

An N-terminal signal peptide occupies residues 1–20 (MIEVLLVTICLAAFPYQGSS). Residues 21-191 (IILESGNVND…ASQLVVTAEQ (171 aa)) constitute a propeptide that is removed on maturation. The residue at position 192 (Q192) is a Pyrrolidone carboxylic acid. In terms of domain architecture, Peptidase M12B spans 198–394 (RYVELFIVVD…ENPQCILNEP (197 aa)). Residues E201 and D285 each contribute to the Ca(2+) site. 3 cysteine pairs are disulfide-bonded: C309–C389, C349–C373, and C351–C356. Zn(2+) is bound at residue H334. The active site involves E335. Positions 338 and 344 each coordinate Zn(2+). N372 carries N-linked (GlcNAc...) asparagine glycosylation. The Ca(2+) site is built by C389, N392, V404, N407, L409, E411, E414, and D417. Positions 402–488 (PPVCGNELLE…ECPADVFHKN (87 aa)) constitute a Disintegrin domain. Intrachain disulfides connect C405-C424, C405-C434, C416-C429, C416-C434, C418-C424, C428-C451, C442-C448, C447-C473, C460-C480, C467-C492, C467-C499, C492-C504, C499-C504, C511-C526, C511-C561, C526-C572, C539-C549, C549-C556, C556-C598, C561-C572, C592-C603, and C598-C603. The D/ECD-tripeptide motif lies at 466–468 (ECD). Ca(2+)-binding residues include D468, P469, E471, D483, and V484.

It belongs to the venom metalloproteinase (M12B) family. P-III subfamily. P-IIIb sub-subfamily. Monomer. It depends on Zn(2+) as a cofactor. In terms of tissue distribution, expressed by the venom gland.

Its subcellular location is the secreted. The catalysed reaction is Cleavage of 5-His-|-Leu-6, 10-His-|-Leu-11, 14-Ala-|-Leu-15, 16-Tyr-|-Leu-17 and 24-Phe-|-Phe-25 in insulin B chain.. With respect to regulation, inhibited by EDTA and EGTA. Its function is as follows. Has caseinolytic activity. Causes hemorrhage on rabbit skin and causes myonecrosis in mouse tibialis anterior muscle. Inhibits platelet aggregation. In Bothrops jararaca (Jararaca), this protein is Zinc metalloproteinase-disintegrin-like bothropasin.